Here is a 466-residue protein sequence, read N- to C-terminus: Muscarinic acetylcholine receptor M2 (466 aa).

Residues 1 to 25 (MNNSTYINSSSENVIALESPYKTIE) are Extracellular-facing. N-linked (GlcNAc...) asparagine glycosylation is found at Asn2, Asn3, and Asn8. The chain crosses the membrane as a helical span at residues 26–48 (VVFIVLVAGSLSLVTIIGNILVM). Topologically, residues 49–62 (VSIKVNRHLQTVNN) are cytoplasmic. A helical membrane pass occupies residues 63 to 83 (YFLFSLACADLIIGIFSMNLY). Over 84-100 (TLYTVIGYWPLGPVVCD) the chain is Extracellular. Cys99 and Cys179 are oxidised to a cystine. Residues 101–122 (LWLALDYVVSNASVMNLLIISF) form a helical membrane-spanning segment. The Important for signaling signature appears at 123-125 (DRY). Residues 123–142 (DRYFCVTKPLTYPVKRTTKM) lie on the Cytoplasmic side of the membrane. The chain crosses the membrane as a helical span at residues 143–165 (AGMMIAAAWVLSFILWAPAILFW). The Extracellular portion of the chain corresponds to 166-187 (QFIVGGRTVPDKDCYIQFFSNP). The helical transmembrane segment at 188–212 (AVTFGTAIAAFYLPVIIMTVLYWQI) threads the bilayer. Over 213–387 (SRASKSRIKK…PPSREKKVTR (175 aa)) the chain is Cytoplasmic. Disordered stretches follow at residues 223-265 (GKKE…KVQN) and 279-315 (QGEEKDSSNDSTSVSVVPSNTKEDEAAKDASQISASQ). Polar residues-rich tracts occupy residues 228 to 238 (AQNQDPVSPSL) and 246 to 256 (PNNNNIPTSSD). Residues 287 to 298 (NDSTSVSVVPSN) are compositionally biased toward low complexity. A helical transmembrane segment spans residues 388–410 (TILAILLAFIITWTPYNVMVLIN). Residues 411 to 418 (SFCASCIP) lie on the Extracellular side of the membrane. Cysteines 413 and 416 form a disulfide. Residues 419 to 442 (GTVWTIGYWLCYINSTINPACYAL) form a helical membrane-spanning segment. The Important for signaling motif lies at 436-440 (NPACY). Over 443 to 466 (CNATFKKTFKHLLMCHYKNIGATR) the chain is Cytoplasmic. 3 positions are modified to phosphothreonine: Thr446, Thr450, and Thr465.

The protein belongs to the G-protein coupled receptor 1 family. Muscarinic acetylcholine receptor subfamily. CHRM2 sub-subfamily.

The protein localises to the cell membrane. The protein resides in the postsynaptic cell membrane. Functionally, the muscarinic acetylcholine receptor mediates various cellular responses, including inhibition of adenylate cyclase, breakdown of phosphoinositides and modulation of potassium channels through the action of G proteins. Primary transducing effect is adenylate cyclase inhibition. Signaling promotes phospholipase C activity, leading to the release of inositol trisphosphate (IP3); this then triggers calcium ion release into the cytosol. The sequence is that of Muscarinic acetylcholine receptor M2 (CHRM2) from Gallus gallus (Chicken).